The chain runs to 454 residues: Tol-Pal system protein TolB (454 aa).

The signal sequence occupies residues 1–21; that stretch reads MSLRPISLMLALLLTSAPALA.

Belongs to the TolB family. As to quaternary structure, the Tol-Pal system is composed of five core proteins: the inner membrane proteins TolA, TolQ and TolR, the periplasmic protein TolB and the outer membrane protein Pal. They form a network linking the inner and outer membranes and the peptidoglycan layer.

The protein resides in the periplasm. Part of the Tol-Pal system, which plays a role in outer membrane invagination during cell division and is important for maintaining outer membrane integrity. The chain is Tol-Pal system protein TolB from Sphingopyxis alaskensis (strain DSM 13593 / LMG 18877 / RB2256) (Sphingomonas alaskensis).